Consider the following 360-residue polypeptide: 45 kDa calcium-binding protein (360 aa).

Positions 1–29 (MVSKQAFLFSLGSLYLSLLFVFLLMDVYA) are cleaved as a signal peptide. The N-linked (GlcNAc...) asparagine glycan is linked to Asn33. EF-hand domains lie at 96–131 (RNRR…KTEE), 135–170 (EAVN…SKGF), 231–266 (MLKF…TVEN), 276–311 (WVRD…MNEY), and 312–347 (NALN…FTGS). Positions 109, 111, 113, 115, 120, 148, 150, 152, 154, 159, 244, 246, 248, 250, 255, 289, 291, 293, 300, 325, 327, 329, 331, and 336 each coordinate Ca(2+).

This sequence belongs to the CREC family.

Its subcellular location is the golgi apparatus lumen. In terms of biological role, may regulate calcium-dependent activities in the endoplasmic reticulum lumen or post-ER compartment. The sequence is that of 45 kDa calcium-binding protein (sdf4) from Xenopus tropicalis (Western clawed frog).